We begin with the raw amino-acid sequence, 206 residues long: Holliday junction branch migration complex subunit RuvA (206 aa).

The segment at 1-63 is domain I; that stretch reads MISSLRGDVI…DDAHTLYAFS (63 aa). The interval 64-142 is domain II; it reads TSEQRETFGI…ALEATSGQAT (79 aa). The segment at 143–150 is flexible linker; the sequence is IGDIAATG. The interval 151–206 is domain III; sequence NDTALQSQVVEALVGLGFTEAKAATAVKKILEEQNGTTDPSSVLREALQRLSGQKR.

Belongs to the RuvA family. In terms of assembly, homotetramer. Forms an RuvA(8)-RuvB(12)-Holliday junction (HJ) complex. HJ DNA is sandwiched between 2 RuvA tetramers; dsDNA enters through RuvA and exits via RuvB. An RuvB hexamer assembles on each DNA strand where it exits the tetramer. Each RuvB hexamer is contacted by two RuvA subunits (via domain III) on 2 adjacent RuvB subunits; this complex drives branch migration. In the full resolvosome a probable DNA-RuvA(4)-RuvB(12)-RuvC(2) complex forms which resolves the HJ.

The protein resides in the cytoplasm. Functionally, the RuvA-RuvB-RuvC complex processes Holliday junction (HJ) DNA during genetic recombination and DNA repair, while the RuvA-RuvB complex plays an important role in the rescue of blocked DNA replication forks via replication fork reversal (RFR). RuvA specifically binds to HJ cruciform DNA, conferring on it an open structure. The RuvB hexamer acts as an ATP-dependent pump, pulling dsDNA into and through the RuvAB complex. HJ branch migration allows RuvC to scan DNA until it finds its consensus sequence, where it cleaves and resolves the cruciform DNA. This Corynebacterium urealyticum (strain ATCC 43042 / DSM 7109) protein is Holliday junction branch migration complex subunit RuvA.